The chain runs to 291 residues: Trimeric intracellular cation channel type B (291 aa).

Over 1-19 the chain is Lumenal; sequence MDSPWDELALAFSRTSMFP. A helical membrane pass occupies residues 20–33; it reads FFDIAHYLVSVMAV. The Cytoplasmic segment spans residues 34–50; sequence KRQPGAAALAWKNPISS. A helical transmembrane segment spans residues 51–70; it reads WFTAMLHCFGGGILSCLLLA. The Lumenal segment spans residues 71-82; the sequence is EPPLKFLANHTN. The helical transmembrane segment at 83–99 threads the bilayer; it reads ILLASSIWYITFFCPHD. The Cytoplasmic segment spans residues 100–104; the sequence is LVSQG. The chain crosses the membrane as a helical span at residues 105-121; that stretch reads YSYLPVQLLASGMKEVT. A 1,2-diacyl-sn-glycero-3-phospho-(1D-myo-inositol-4,5-bisphosphate) is bound by residues Lys-118 and Arg-122. The Lumenal portion of the chain corresponds to 122–139; it reads RTWKIVGGVTHANSYYKN. A helical transmembrane segment spans residues 140 to 156; it reads GWIVMIAIGWARGAGGT. Topologically, residues 157–179 are cytoplasmic; it reads IITNFERLVKGDWKPEGDEWLKM. The helical transmembrane segment at 180–195 threads the bilayer; sequence SYPAKVTLLGSVIFTF. At 196 to 207 the chain is on the lumenal side; sequence QHTQHLAISKHN. The helical transmembrane segment at 208-227 threads the bilayer; the sequence is LMFLYTIFIVATKITMMTTQ. Residues 228 to 291 lie on the Cytoplasmic side of the membrane; it reads TSTMTFAPFE…VKKKHTKKNE (64 aa). The segment at 256–291 is disordered; sequence KKSEAKSPSNGVGSLASKPVDVASDNVKKKHTKKNE. The residue at position 262 (Ser-262) is a Phosphoserine.

Belongs to the TMEM38 family. As to quaternary structure, homotrimer; conformation seems to be controled by binding to diacylglycerol (DAG).

It is found in the endoplasmic reticulum membrane. It carries out the reaction K(+)(in) = K(+)(out). Channel activity is activated by increased cytosolic Ca(2+) levels and blocked by luminal high Ca(2+) levels. Its function is as follows. Intracellular monovalent cation channel required for maintenance of rapid intracellular calcium release. Acts as a potassium counter-ion channel that functions in synchronization with calcium release from intracellular stores. Activated by increased cytosolic Ca(2+) levels. This is Trimeric intracellular cation channel type B from Homo sapiens (Human).